We begin with the raw amino-acid sequence, 885 residues long: Alpha-actinin (885 aa).

The tract at residues 1 to 242 (MTQDGYMQQE…IMTYVSWYYH (242 aa)) is actin-binding. 2 consecutive Calponin-homology (CH) domains span residues 26–130 (KQQR…LRFA) and 139–245 (MTAK…HAFH). Spectrin repeat units lie at residues 270-377 (LMEE…EEWL), 389-494 (HLAQ…ALDE), 508-614 (EFAK…HTLQ), and 626-727 (LRRQ…NEVE). EF-hand domains lie at 741-776 (EQLN…LGYN) and 780-815 (DDRP…EYTD). 8 residues coordinate Ca(2+): Asp754, Thr758, Arg760, Glu765, Asp793, Asn795, Thr797, and Tyr799.

Belongs to the alpha-actinin family. Homodimer; antiparallel.

Functionally, F-actin cross-linking protein which is thought to anchor actin to a variety of intracellular structures. This is a bundling protein. The chain is Alpha-actinin from Dermatophagoides farinae (American house dust mite).